The sequence spans 336 residues: Phenylalanine--tRNA ligase alpha subunit (336 aa).

Glu-257 provides a ligand contact to Mg(2+).

The protein belongs to the class-II aminoacyl-tRNA synthetase family. Phe-tRNA synthetase alpha subunit type 1 subfamily. In terms of assembly, tetramer of two alpha and two beta subunits. The cofactor is Mg(2+).

The protein resides in the cytoplasm. It carries out the reaction tRNA(Phe) + L-phenylalanine + ATP = L-phenylalanyl-tRNA(Phe) + AMP + diphosphate + H(+). The chain is Phenylalanine--tRNA ligase alpha subunit from Xanthomonas campestris pv. campestris (strain 8004).